Reading from the N-terminus, the 201-residue chain is Lipopolysaccharide core heptose(II)-phosphate phosphatase (201 aa).

The N-terminal stretch at 1–35 (MLAFTLRFIKNKRYLATLAGALVIIAGLTSQHAWS) is a signal peptide.

This sequence belongs to the phosphoglycerate mutase family. Ais subfamily.

It is found in the periplasm. It participates in bacterial outer membrane biogenesis; lipopolysaccharide metabolism. Functionally, catalyzes the dephosphorylation of heptose(II) of the outer membrane lipopolysaccharide core. In Salmonella choleraesuis (strain SC-B67), this protein is Lipopolysaccharide core heptose(II)-phosphate phosphatase.